The primary structure comprises 371 residues: Histidinol-phosphate aminotransferase (371 aa).

K232 is subject to N6-(pyridoxal phosphate)lysine.

The protein belongs to the class-II pyridoxal-phosphate-dependent aminotransferase family. Histidinol-phosphate aminotransferase subfamily. As to quaternary structure, homodimer. Requires pyridoxal 5'-phosphate as cofactor.

The enzyme catalyses L-histidinol phosphate + 2-oxoglutarate = 3-(imidazol-4-yl)-2-oxopropyl phosphate + L-glutamate. The protein operates within amino-acid biosynthesis; L-histidine biosynthesis; L-histidine from 5-phospho-alpha-D-ribose 1-diphosphate: step 7/9. This chain is Histidinol-phosphate aminotransferase, found in Methylibium petroleiphilum (strain ATCC BAA-1232 / LMG 22953 / PM1).